The chain runs to 792 residues: Probable phosphoketolase (792 aa).

This sequence belongs to the XFP family. Requires thiamine diphosphate as cofactor.

This Brucella melitensis biotype 1 (strain ATCC 23456 / CCUG 17765 / NCTC 10094 / 16M) protein is Probable phosphoketolase.